The following is an 887-amino-acid chain: Alanine--tRNA ligase (887 aa).

Positions 564, 568, 676, and 680 each coordinate Zn(2+). The segment at 854 to 873 (GQGGGGRPDMAQSGGPKGNK) is disordered.

This sequence belongs to the class-II aminoacyl-tRNA synthetase family. Requires Zn(2+) as cofactor.

Its subcellular location is the cytoplasm. The catalysed reaction is tRNA(Ala) + L-alanine + ATP = L-alanyl-tRNA(Ala) + AMP + diphosphate. In terms of biological role, catalyzes the attachment of alanine to tRNA(Ala) in a two-step reaction: alanine is first activated by ATP to form Ala-AMP and then transferred to the acceptor end of tRNA(Ala). Also edits incorrectly charged Ser-tRNA(Ala) and Gly-tRNA(Ala) via its editing domain. This is Alanine--tRNA ligase from Bartonella henselae (strain ATCC 49882 / DSM 28221 / CCUG 30454 / Houston 1) (Rochalimaea henselae).